The chain runs to 381 residues: MSARVARAGWAWRSWGRRAASSLREPPPDAVDVAELLRDSSVAEEGAQEAVARRRPPSQCSVLLFPGQGCQAVGMGSGLLHLPRVRQLYEAAHRVLGYDLLELCLRGPQEDLDRTVHCQPAVFVASLAAVEKLHHLQPAVIDNCVAAAGFSVGEFAALVFAGAMDFSEGLYAVKARAEAMQEASEAVPSGMLSVLGQRQSNFSFACLEAQEHCKSLGIENPVCQVSNYLFPDCRVISGHLEALQFLRRNSAKYHFRRTKMLPVSGGFHTCLMEPAVDPLMKVLGSINIKKPLVAVHSNVSGQKYTHPQHIRKLLGQQVVSPVKWEQTMHSIYERKKGMEFPSTYEVGPGQQLGSILKCCNRQAWKSYSHVDVMQNIMDPDP.

Residues Ser-151 and His-268 contribute to the active site. Position 312 is an N6-succinyllysine (Lys-312).

It belongs to the type II malonyltransferase family. As to expression, expressed in retinal ganglion cells.

The protein resides in the mitochondrion. The catalysed reaction is holo-[ACP] + malonyl-CoA = malonyl-[ACP] + CoA. Its pathway is lipid metabolism; fatty acid biosynthesis. Catalyzes the transfer of a malonyl moiety from malonyl-CoA to the free thiol group of the phosphopantetheine arm of the mitochondrial ACP protein (NDUFAB1). This suggests the existence of the biosynthesis of fatty acids in mitochondria. The polypeptide is Malonyl-CoA-acyl carrier protein transacylase, mitochondrial (Mus musculus (Mouse)).